The primary structure comprises 83 residues: Homeobox protein DLX-2 (83 aa).

Positions 1–14 are enriched in polar residues; it reads STATDSSYYTNQQH. Disordered regions lie at residues 1 to 27 and 63 to 83; these read STAT…SPYA and PYGT…LEPE.

It belongs to the distal-less homeobox family. As to quaternary structure, interacts (via homeobox DNA-binding domain) with POU4F2; this interaction enhances retinal ganglion cell (RGC) differentiation.

Its subcellular location is the nucleus. In terms of biological role, acts as a transcriptional activator. Activates transcription of CGA/alpha-GSU, via binding to the downstream activin regulatory element (DARE) in the gene promoter. Plays a role in terminal differentiation of interneurons, such as amacrine and bipolar cells in the developing retina. Likely to play a regulatory role in the development of the ventral forebrain. May play a role in craniofacial patterning and morphogenesis. This chain is Homeobox protein DLX-2 (Dlx2), found in Rattus norvegicus (Rat).